The following is a 135-amino-acid chain: Hemoglobin subunit beta-2 (135 aa).

Residues 2 to 135 (HWTAEEKALV…VVDALSKGYH (134 aa)) enclose the Globin domain. Residues histidine 57 and histidine 81 each contribute to the heme b site.

It belongs to the globin family. In terms of assembly, hb 2 is a heterotetramer of two alpha and two beta-2 chains. As to expression, red blood cells (at protein level).

Involved in oxygen transport from gills to the various peripheral tissues. This chain is Hemoglobin subunit beta-2, found in Somniosus microcephalus (Greenland sleeper shark).